We begin with the raw amino-acid sequence, 547 residues long: G protein-coupled receptor associated sorting protein 3 (547 aa).

Over residues 1–10 the composition is skewed to basic residues; it reads MAGTKNKTRA. 2 disordered regions span residues 1–32 and 80–102; these read MAGT…EATG and TLGK…STCK.

The protein belongs to the GPRASP family. As to quaternary structure, homodimer. As to expression, highly expressed in brain. Not expressed in lung or liver. Down-regulated in brain from patients suffering from Alzheimer disease.

The protein localises to the cytoplasm. It is found in the nucleus. In terms of biological role, survival and differentiation promoting protein that plays a role in the regulation of neurosynaptogenesis. Induces phosphatase PP2A activity which results in APP dephosphorylation and inhibits BACE1-mediated processing of APP. In Homo sapiens (Human), this protein is G protein-coupled receptor associated sorting protein 3.